The following is a 218-amino-acid chain: Probable transaldolase (218 aa).

The Schiff-base intermediate with substrate role is filled by lysine 87.

It belongs to the transaldolase family. Type 3B subfamily.

It is found in the cytoplasm. The enzyme catalyses D-sedoheptulose 7-phosphate + D-glyceraldehyde 3-phosphate = D-erythrose 4-phosphate + beta-D-fructose 6-phosphate. Its pathway is carbohydrate degradation; pentose phosphate pathway; D-glyceraldehyde 3-phosphate and beta-D-fructose 6-phosphate from D-ribose 5-phosphate and D-xylulose 5-phosphate (non-oxidative stage): step 2/3. Its function is as follows. Transaldolase is important for the balance of metabolites in the pentose-phosphate pathway. This chain is Probable transaldolase, found in Flavobacterium psychrophilum (strain ATCC 49511 / DSM 21280 / CIP 103535 / JIP02/86).